A 330-amino-acid chain; its full sequence is tRNA pseudouridine synthase B (330 aa).

Asp42 functions as the Nucleophile in the catalytic mechanism.

It belongs to the pseudouridine synthase TruB family. Type 1 subfamily.

It carries out the reaction uridine(55) in tRNA = pseudouridine(55) in tRNA. In terms of biological role, responsible for synthesis of pseudouridine from uracil-55 in the psi GC loop of transfer RNAs. The protein is tRNA pseudouridine synthase B of Lactococcus lactis subsp. cremoris (strain SK11).